The primary structure comprises 926 residues: MTELQAKDPQVLHTSGASPSPPHIGSPLLARLDSGPFQGSQHSDVSSVVSPIPISLDGLLFPRSCRGPELPDGKTGDQQSLSDVEGAFSGVEATHREGGRNSRAPEKDSRLLDSVLDSLLTPSGTEQSHASPPACEAITSWCLFGPELPEDPRSVPATKGLLSPLMSRPEIKAGDSSGTGAGQKVLPKGLSPPRQLLLPTSGSAHWPGAGVKPSPQPAAGEVEEDSGLETEGSAAPLLKSKPRALEGTGSGGGVAANAASAAPGGVTLVPKEDSRFSAPRVSLEQDSPIAPGRSPLATTVVDFIHVPILPLNHALLAARTRQLLEGDSYDGGATAQGPFAPPRGSPSAPSPPVPCGDFPDCTYPLEGDPKEDVFPLYGDFQTPGLKIKEEEEGADAAVRSPRPYLSAGASSSTFPDFPLAPAPQRAPSSRPGEAAVAGGPSSAAVSPASSSGSALECILYKAEGAPPTQGSFAPLPCKPPAAGSCLLPRDSLPAAPATAAAPAIYQPLGLNGLPQLGYQAAVLKDSLPQVYPPYLNYLRPDSEASQSPQYGFDSLPQKICLICGDEASGCHYGVLTCGSCKVFFKRAMEGQHNYLCAGRNDCIVDKIRRKNCPACRLRKCCQAGMVLGGRKFKKFNKVRVMRTLDGVALPQSVGLPNESQALGQRITFSPNQEIQLVPPLINLLMSIEPDVVYAGHDNTKPDTSSSLLTSLNQLGERQLLSVVKWSKSLPGFRNLHIDDQITLIQYSWMSLMVFGLGWRSYKHVSGQMLYFAPDLILNEQRMKELSFYSLCLTMWQIPQEFVKLQVTHEEFLCMKVLLLLNTIPLEGLRSQSQFEEMRSSYIRELIKAIGLRQKGVVPSSQRFYQLTKLLDSLHDLVKQLHLYCLNTFIQSRTLAVEFPEMMSEVIAAQLPKILAGMVKPLLFHKK.

The segment at 1–48 is disordered; that stretch reads MTELQAKDPQVLHTSGASPSPPHIGSPLLARLDSGPFQGSQHSDVSSV. The tract at residues 1 to 165 is AF3; mediates transcriptional activation (in isoform B); it reads MTELQAKDPQ…PATKGLLSPL (165 aa). The tract at residues 1 to 559 is modulating, Pro-Rich; sequence MTELQAKDPQ…YGFDSLPQKI (559 aa). Lysine 7 is covalently cross-linked (Glycyl lysine isopeptide (Lys-Gly) (interchain with G-Cter in SUMO)). Phosphoserine is present on serine 20. An LXXL motif 1 motif is present at residues 56–60; the sequence is LDGLL. Serine 82 is subject to Phosphoserine. The LXXL motif 1 motif lies at 116 to 120; it reads LDSLL. 2 positions are modified to phosphoserine: serine 131 and serine 163. The tract at residues 166 to 305 is mediates transcriptional transrepression (in isoform A); the sequence is MSRPEIKAGD…LATTVVDFIH (140 aa). Positions 168-256 are disordered; the sequence is RPEIKAGDSS…GTGSGGGVAA (89 aa). Residues 184–188 carry the Nuclear localization signal motif; the sequence is KVLPK. Residues serine 191 and serine 214 each carry the phosphoserine modification. A Phosphoserine; by MAPK1 modification is found at serine 294. Positions 327–364 are disordered; sequence DSYDGGATAQGPFAPPRGSPSAPSPPVPCGDFPDCTYP. Positions 339 to 354 are enriched in pro residues; that stretch reads FAPPRGSPSAPSPPVP. Serine 345 carries the phosphoserine; by MAPK modification. Residue lysine 388 forms a Glycyl lysine isopeptide (Lys-Gly) (interchain with G-Cter in SUMO); alternate linkage. Lysine 388 is covalently cross-linked (Glycyl lysine isopeptide (Lys-Gly) (interchain with G-Cter in ubiquitin); alternate). The interval 391–447 is disordered; it reads EEGADAAVRSPRPYLSAGASSSTFPDFPLAPAPQRAPSSRPGEAAVAGGPSSAAVSP. Serine 400 is modified (phosphoserine; by CDK2). Residues 422–447 are compositionally biased toward low complexity; it reads APQRAPSSRPGEAAVAGGPSSAAVSP. Residues 453–539 form an AF1; mediates transcriptional activation region; sequence SALECILYKA…VYPPYLNYLR (87 aa). Lysine 524 is covalently cross-linked (Glycyl lysine isopeptide (Lys-Gly) (interchain with G-Cter in SUMO)). The segment at residues 557 to 632 is a DNA-binding region (nuclear receptor); that stretch reads QKICLICGDE…AGMVLGGRKF (76 aa). NR C4-type zinc fingers lie at residues 560–580 and 596–615; these read CLIC…CGSC and CAGR…CPAC. A Phosphoserine modification is found at serine 669. The NR LBD domain occupies 672–906; that stretch reads QEIQLVPPLI…EFPEMMSEVI (235 aa). The interval 673–926 is AF2; mediates transcriptional activation; the sequence is EIQLVPPLIN…MVKPLLFHKK (254 aa). Arginine 759 is a progesterone binding site.

It belongs to the nuclear hormone receptor family. NR3 subfamily. Interacts with SMARD1 and UNC45A. Interacts with CUEDC2; the interaction promotes ubiquitination, decreases sumoylation, and represses transcriptional activity. Interacts with PIAS3; the interaction promotes sumoylation of PR in a hormone-dependent manner, inhibits DNA-binding, and alters nuclear export. Interacts with SP1; the interaction requires ligand-induced phosphorylation on Ser-294 by ERK1/2 MAPK. Interacts with PRMT2. Isoform A interacts with NCOR2. Isoform B (but not isoform A) interacts with NCOA2 and NCOA1. Isoform B (but not isoform A) interacts with KLF9. Post-translationally, phosphorylated on multiple serine sites. Several of these sites are hormone-dependent. Phosphorylation on Ser-294 is highly hormone-dependent and modulates ubiquitination and sumoylation on Lys-388. Phosphorylation on Ser-345 also requires induction by hormone. Basal phosphorylation on Ser-82, Ser-163, Ser-191 and Ser-400 is increased in response to progesterone and can be phosphorylated in vitro by the CDK2-A1 complex. Increased levels of phosphorylation on Ser-400 also in the presence of EGF, heregulin, IGF, PMA and FBS. Phosphorylation at this site by CDK2 is ligand-independent, and increases nuclear translocation and transcriptional activity. Phosphorylation at Ser-163 and Ser-294, but not at Ser-191, is impaired during the G(2)/M phase of the cell cycle. Phosphorylation on Ser-345 by ERK1/2 MAPK is required for interaction with SP1. In terms of processing, sumoylation is hormone-dependent and represses transcriptional activity. Sumoylation on all three sites is enhanced by PIAS3. Desumoylated by SENP1. Sumoylation on Lys-388, the main site of sumoylation, is repressed by ubiquitination on the same site, and modulated by phosphorylation at Ser-294. Ubiquitination is hormone-dependent and represses sumoylation on the same site. Promoted by MAPK-mediated phosphorylation on Ser-294. Ubiquitinated by UBR5, leading to its degradation: UBR5 specifically recognizes and binds ligand-bound PGR when it is not associated with coactivators (NCOAs). In presence of NCOAs, the UBR5-degron is not accessible, preventing its ubiquitination and degradation. Post-translationally, palmitoylated by ZDHHC7 and ZDHHC21. Palmitoylation is required for plasma membrane targeting and for rapid intracellular signaling via ERK and AKT kinases and cAMP generation. In terms of tissue distribution, expression of isoform A and isoform B in mammary epithelial cells is temporally and spatially separated during normal mammary gland development. Isoform A and isoform B are expressed in the pituitary. Isoform A and isoform B are differentially expressed in the ovary and oviduct, and the level of expression is dependent on both the cell type and estrous cycle stage.

Its subcellular location is the nucleus. It localises to the cytoplasm. In terms of biological role, the steroid hormones and their receptors are involved in the regulation of eukaryotic gene expression and affect cellular proliferation and differentiation in target tissues. Depending on the isoform, progesterone receptor functions as a transcriptional activator or repressor. Ligand-dependent transdominant repressor of steroid hormone receptor transcriptional activity including repression of its isoform B, MR and ER. Transrepressional activity may involve recruitment of corepressor NCOR2. Functionally, transcriptional activator of several progesteron-dependent promoters in a variety of cell types. Involved in activation of SRC-dependent MAPK signaling on hormone stimulation. This Mus musculus (Mouse) protein is Progesterone receptor (Pgr).